Here is a 736-residue protein sequence, read N- to C-terminus: Orphan sodium- and chloride-dependent neurotransmitter transporter NTT5 (736 aa).

Topologically, residues 1 to 138 are cytoplasmic; that stretch reads MKTEAQPSTS…FAYLWLNSGG (138 aa). The next 3 membrane-spanning stretches (helical) occupy residues 139 to 159, 177 to 197, and 199 to 219; these read CSFA…LLFL, IIAP…FILG, and YFNV…QFPV. Over 220–263 the chain is Extracellular; that stretch reads PWEKCPLTMNSSGFDPECERTTPSIYFWYQQALKASDRIEDGGS. Residue Asn-229 is glycosylated (N-linked (GlcNAc...) asparagine). The next 4 membrane-spanning stretches (helical) occupy residues 264–284, 290–310, 338–358, and 383–403; these read PVYS…AFMI, TGKV…GFFI, VWSL…GSVA, and LTLL…ATVI. Residues 404 to 495 are Extracellular-facing; it reads THRCCERNAE…EAMSFLPPSV (92 aa). A run of 5 helical transmembrane segments spans residues 496–516, 534–554, 568–588, 609–629, and 659–679; these read FWSF…AIGI, HTKL…LFFT, YWIV…VSWA, IFGW…FVTM, and ALLL…AYFV. The Cytoplasmic segment spans residues 680 to 736; the sequence is YCRIHRIPFRPKSGDGPMTASTSLPLSHQLTPSKEVQKEEILQVDETKYPSTCNVTS.

Belongs to the sodium:neurotransmitter symporter (SNF) (TC 2.A.22) family. SLC6A16 subfamily. Highly expressed in peripheral tissues, particularly in testis, pancreas, and prostate.

It localises to the membrane. The polypeptide is Orphan sodium- and chloride-dependent neurotransmitter transporter NTT5 (SLC6A16) (Homo sapiens (Human)).